The sequence spans 291 residues: MDYLVKALAYDGKVRAYAARTTDMVNEGQRRHGTWPTASAALGRTMTASLMLGAMLKGDDKLTVKIEGGGPIGAIVADANAKGEVRAYVSNPQVHFDLNEQGKLDVRRAVGTNGTLSVVKDLGLREFFTGQVEIVSGELGDDFTYYLVSSEQVPSSVGVGVLVNPDNTILAAGGFIIQLMPGTDDETITKIEQRLSQVEPISKLIQKGLTPEEILEEVLGEKPEILETMPVRFHCPCSKERFETAILGLGKKEIQDMIEEDGQAEAVCHFCNEKYLFTKEELEGLRDQTTR.

2 disulfides stabilise this stretch: cysteine 235-cysteine 237 and cysteine 268-cysteine 271.

The protein belongs to the HSP33 family. Under oxidizing conditions two disulfide bonds are formed involving the reactive cysteines. Under reducing conditions zinc is bound to the reactive cysteines and the protein is inactive.

Its subcellular location is the cytoplasm. In terms of biological role, redox regulated molecular chaperone. Protects both thermally unfolding and oxidatively damaged proteins from irreversible aggregation. Plays an important role in the bacterial defense system toward oxidative stress. The protein is 33 kDa chaperonin of Bacillus subtilis (strain 168).